A 71-amino-acid chain; its full sequence is UPF0352 protein Spea_1764 (71 aa).

Belongs to the UPF0352 family.

This is UPF0352 protein Spea_1764 from Shewanella pealeana (strain ATCC 700345 / ANG-SQ1).